A 493-amino-acid polypeptide reads, in one-letter code: Farnesoate epoxidase (493 aa).

The N-terminal stretch at 1–24 (MLALIVLCFILFFYIISRRHRGLC) is a signal peptide. C433 lines the heme pocket.

This sequence belongs to the cytochrome P450 family. Heme serves as cofactor. As to expression, constitutively expressed in corpora allata from the first instar larval to adult stages.

The enzyme catalyses (2E,6E)-farnesoate + reduced [NADPH--hemoprotein reductase] + O2 = juvenile hormone III carboxylate + oxidized [NADPH--hemoprotein reductase] + H2O + H(+). Catalyzes the conversion of farnesoate to juvenile hormone III acid in juvenile hormone biosynthesis. The chain is Farnesoate epoxidase from Bombyx mori (Silk moth).